The following is a 464-amino-acid chain: Plant intracellular Ras-group-related LRR protein 3 (464 aa).

The stretch at A106 to E138 forms a coiled coil. 10 LRR repeats span residues G160–I183, V184–L206, E207–L230, L232–C252, S254–G275, L276–M299, S301–L322, T323–L347, A348–L370, and K372–Q393. Positions V398–W406 match the GVYW; degenerate motif.

This sequence belongs to the SHOC2 family. Widely expressed.

Leucine-rich repeat protein that likely mediates protein interactions, possibly in the context of signal transduction. This chain is Plant intracellular Ras-group-related LRR protein 3 (PIRL3), found in Arabidopsis thaliana (Mouse-ear cress).